A 111-amino-acid chain; its full sequence is UPF0339 protein in ptx operon 5'region (111 aa).

Tandem repeats lie at residues 10-58 (DKAG…RYER) and 61-109 (SGAD…VVEV).

It belongs to the UPF0339 family. Duplicated subfamily.

The sequence is that of UPF0339 protein in ptx operon 5'region from Stutzerimonas stutzeri (Pseudomonas stutzeri).